The chain runs to 62 residues: Chromatin protein Cren7 (62 aa).

Belongs to the Cren7 family. As to quaternary structure, monomer. Post-translationally, methylated at multiple sites, to varying extents.

The protein localises to the chromosome. Its subcellular location is the cytoplasm. In terms of biological role, a chromatin protein, binds double-stranded DNA without sequence specificity. Constrains negative DNA supercoils. This is Chromatin protein Cren7 from Staphylothermus marinus (strain ATCC 43588 / DSM 3639 / JCM 9404 / F1).